The following is a 432-amino-acid chain: Anaerobic glycerol-3-phosphate dehydrogenase subunit B (432 aa).

This sequence belongs to the anaerobic G-3-P dehydrogenase subunit B family. As to quaternary structure, composed of a catalytic GlpA/B dimer and of membrane bound GlpC. The cofactor is FMN.

It carries out the reaction a quinone + sn-glycerol 3-phosphate = dihydroxyacetone phosphate + a quinol. It participates in polyol metabolism; glycerol degradation via glycerol kinase pathway; glycerone phosphate from sn-glycerol 3-phosphate (anaerobic route): step 1/1. In terms of biological role, conversion of glycerol 3-phosphate to dihydroxyacetone. Uses fumarate or nitrate as electron acceptor. The sequence is that of Anaerobic glycerol-3-phosphate dehydrogenase subunit B from Histophilus somni (strain 129Pt) (Haemophilus somnus).